The sequence spans 132 residues: Small ribosomal subunit protein uS8 (132 aa).

Belongs to the universal ribosomal protein uS8 family. As to quaternary structure, part of the 30S ribosomal subunit. Contacts proteins S5 and S12.

Functionally, one of the primary rRNA binding proteins, it binds directly to 16S rRNA central domain where it helps coordinate assembly of the platform of the 30S subunit. The polypeptide is Small ribosomal subunit protein uS8 (Brevibacillus brevis (strain 47 / JCM 6285 / NBRC 100599)).